Consider the following 156-residue polypeptide: Arginine repressor (156 aa).

This sequence belongs to the ArgR family.

It localises to the cytoplasm. The protein operates within amino-acid biosynthesis; L-arginine biosynthesis [regulation]. Functionally, regulates arginine biosynthesis genes. This Salmonella paratyphi C (strain RKS4594) protein is Arginine repressor.